Here is a 348-residue protein sequence, read N- to C-terminus: Aspartate carbamoyltransferase catalytic subunit (348 aa).

Residues Arg-57 and Thr-58 each coordinate carbamoyl phosphate. Lys-86 lines the L-aspartate pocket. Arg-107, His-135, and Gln-138 together coordinate carbamoyl phosphate. Residues Arg-172 and Arg-234 each coordinate L-aspartate. Carbamoyl phosphate contacts are provided by Leu-274 and Pro-275.

This sequence belongs to the aspartate/ornithine carbamoyltransferase superfamily. ATCase family. As to quaternary structure, heterododecamer (2C3:3R2) of six catalytic PyrB chains organized as two trimers (C3), and six regulatory PyrI chains organized as three dimers (R2).

The enzyme catalyses carbamoyl phosphate + L-aspartate = N-carbamoyl-L-aspartate + phosphate + H(+). The protein operates within pyrimidine metabolism; UMP biosynthesis via de novo pathway; (S)-dihydroorotate from bicarbonate: step 2/3. Its function is as follows. Catalyzes the condensation of carbamoyl phosphate and aspartate to form carbamoyl aspartate and inorganic phosphate, the committed step in the de novo pyrimidine nucleotide biosynthesis pathway. The polypeptide is Aspartate carbamoyltransferase catalytic subunit (Dichelobacter nodosus (strain VCS1703A)).